A 407-amino-acid polypeptide reads, in one-letter code: Lysine racemase (407 aa).

The first 18 residues, 1–18 (MSLGIRYLALLPLFVITA), serve as a signal peptide directing secretion. The N-palmitoyl cysteine moiety is linked to residue cysteine 19. Residue cysteine 19 is the site of S-diacylglycerol cysteine attachment. Cysteine 70 and cysteine 96 are oxidised to a cystine. The Proton acceptor role is filled by lysine 74. Residue lysine 74 is modified to N6-(pyridoxal phosphate)lysine. Residue arginine 173 coordinates substrate. The Proton acceptor role is filled by tyrosine 299. Methionine 347 lines the substrate pocket.

This sequence belongs to the alanine racemase family. Bsr subfamily. Forms a head-to-tail homodimer in the structure. Pyridoxal 5'-phosphate serves as cofactor.

The protein localises to the cell membrane. Its subcellular location is the periplasm. It carries out the reaction L-lysine = D-lysine. The catalysed reaction is L-arginine = D-arginine. With respect to regulation, the racemization activity of Lyr is completely inhibited by hydroxylamine. Amino-acid racemase that catalyzes the interconversion of L-lysine and D-lysine. To a lesser extent, is also able to interconvert arginine enantiomers. Cannot use methionine, asparagine, alanine, leucine, glutamine, phenylalanine and histidine as substrates. The protein is Lysine racemase of Proteus mirabilis.